The chain runs to 430 residues: Serine--tRNA ligase (430 aa).

Positions 41-60 are disordered; the sequence is QSRTQDLQNERNVRSKSIGK. 236–238 contacts L-serine; that stretch reads TAE. 267-269 is a binding site for ATP; it reads RSE. Glu290 contacts L-serine. 354 to 357 serves as a coordination point for ATP; the sequence is EISS. Ser390 contacts L-serine.

Belongs to the class-II aminoacyl-tRNA synthetase family. Type-1 seryl-tRNA synthetase subfamily. Homodimer. The tRNA molecule binds across the dimer.

The protein resides in the cytoplasm. The catalysed reaction is tRNA(Ser) + L-serine + ATP = L-seryl-tRNA(Ser) + AMP + diphosphate + H(+). It catalyses the reaction tRNA(Sec) + L-serine + ATP = L-seryl-tRNA(Sec) + AMP + diphosphate + H(+). It participates in aminoacyl-tRNA biosynthesis; selenocysteinyl-tRNA(Sec) biosynthesis; L-seryl-tRNA(Sec) from L-serine and tRNA(Sec): step 1/1. Its function is as follows. Catalyzes the attachment of serine to tRNA(Ser). Is also able to aminoacylate tRNA(Sec) with serine, to form the misacylated tRNA L-seryl-tRNA(Sec), which will be further converted into selenocysteinyl-tRNA(Sec). The polypeptide is Serine--tRNA ligase (Alteromonas mediterranea (strain DSM 17117 / CIP 110805 / LMG 28347 / Deep ecotype)).